Reading from the N-terminus, the 480-residue chain is Glutamate--tRNA ligase (480 aa).

The short motif at 21-31 (PSPTGYLHVGG) is the 'HIGH' region element. Basic and acidic residues predominate over residues 122 to 146 (NTQEQNKQKPRYDRHCLGDHKHSPE). The interval 122-149 (NTQEQNKQKPRYDRHCLGDHKHSPEQPH) is disordered. The 'KMSKS' region motif lies at 248–252 (KLSKR). K251 is a binding site for ATP.

The protein belongs to the class-I aminoacyl-tRNA synthetase family. Glutamate--tRNA ligase type 1 subfamily. As to quaternary structure, monomer.

It localises to the cytoplasm. The catalysed reaction is tRNA(Glu) + L-glutamate + ATP = L-glutamyl-tRNA(Glu) + AMP + diphosphate. In terms of biological role, catalyzes the attachment of glutamate to tRNA(Glu) in a two-step reaction: glutamate is first activated by ATP to form Glu-AMP and then transferred to the acceptor end of tRNA(Glu). This chain is Glutamate--tRNA ligase, found in Pasteurella multocida (strain Pm70).